The sequence spans 598 residues: Chromodomain Y-like protein (598 aa).

Positions 1-76 (MTFQASHRSA…VDKRKNKKGK (76 aa)) are disordered. The segment covering 44-56 (PSISVSSEQSGAQ) has biased composition (polar residues). One can recognise a Chromo domain in the interval 61-121 (LQVERIVDKR…RHTEKQKEST (61 aa)). The interaction with EZH2 stretch occupies residues 61 to 309 (LQVERIVDKR…NIQTSVTGVT (249 aa)). Residues 65-76 (RIVDKRKNKKGK) are compositionally biased toward basic and acidic residues. At Ser88 the chain carries Phosphoserine. Positions 112 to 121 (RHTEKQKEST) are enriched in basic and acidic residues. A disordered region spans residues 112–149 (RHTEKQKESTLTRTNRTSPNNARKQISRSTNSNFSKTS). A compositionally biased stretch (polar residues) spans 122-149 (LTRTNRTSPNNARKQISRSTNSNFSKTS). N6,N6,N6-trimethyllysine; by EHMT2; alternate is present on Lys135. An N6,N6-dimethyllysine; by EHMT2; alternate modification is found at Lys135. The residue at position 135 (Lys135) is an N6-methyllysine; by EHMT2; alternate. Phosphoserine is present on residues Ser170, Ser201, and Ser216. The interval 204–226 (KSRTAVDGFQSESPEKLDPVEQG) is disordered. The acetyl-CoA-binding domain stretch occupies residues 362 to 594 (SENNSLNPEV…DSMLKYLQRK (233 aa)).

Forms multimers and multimerization is required for stable binding to chromatin. Interacts with HDAC1 and HDAC2 via its C-terminal acetyl-CoA-binding domain. Interacts with EZH2, EED, SUZ12, REST, EHMT1 and EHMT2. Part of a complex containing at least CDYL, REST, WIZ, SETB1, EHMT1 and EHMT2. Part of a complex containing at least CDYL, MIER1, MIER2, HDAC1 and HDAC2. Interacts with CHAF1A and CHAF1B; bridging the CAF-1 complex to the MCM2-7 (MCM) complex. Interacts with MCM3 and MCM5; bridging the CAF-1 complex to the MCM2-7 (MCM) complex. Recruited to Xist RNA-coated X chromosome. Interacts with EHMT2 and PRDM9; interaction only takes place when PRDM9 is bound to hotspot DNA. Expressed in the hippocampus with reduced expression in epileptic tissue compared to normal adjacent tissue (at protein level). Ubiquitous. Expressed at moderate levels in all tissues examined. Isoform 2: Most abundantly expressed isoform.

The protein resides in the nucleus. It is found in the chromosome. It catalyses the reaction 3-hydroxybutanoyl-CoA = (2E)-butenoyl-CoA + H2O. Chromatin reader protein that recognizes and binds histone H3 trimethylated at 'Lys-9', dimethylated at 'Lys-27' and trimethylated at 'Lys-27' (H3K9me3, H3K27me2 and H3K27me3, respectively). Part of multimeric repressive chromatin complexes, where it is required for transmission and restoration of repressive histone marks, thereby preserving the epigenetic landscape. Required for chromatin targeting and maximal enzymatic activity of Polycomb repressive complex 2 (PRC2); acts as a positive regulator of PRC2 activity by bridging the pre-existing histone H3K27me3 and newly recruited PRC2 on neighboring nucleosomes. Acts as a corepressor for REST by facilitating histone-lysine N-methyltransferase EHMT2 recruitment and H3K9 dimethylation at REST target genes for repression. Involved in X chromosome inactivation in females: recruited to Xist RNA-coated X chromosome and facilitates propagation of H3K9me2 by anchoring EHMT2. Promotes EZH2 accumulation and H3K27me3 methylation at DNA double strand breaks (DSBs), thereby facilitating transcriptional repression at sites of DNA damage and homology-directed repair of DSBs. Required for neuronal migration during brain development by repressing expression of RHOA. By repressing the expression of SCN8A, contributes to the inhibition of intrinsic neuronal excitability and epileptogenesis. In addition to acting as a chromatin reader, acts as a hydro-lyase. Shows crotonyl-coA hydratase activity by mediating the conversion of crotonyl-CoA ((2E)-butenoyl-CoA) to beta-hydroxybutyryl-CoA (3-hydroxybutanoyl-CoA), thereby acting as a negative regulator of histone crotonylation. Histone crotonylation is required during spermatogenesis; down-regulation of histone crotonylation by CDYL regulates the reactivation of sex chromosome-linked genes in round spermatids and histone replacement in elongating spermatids. By regulating histone crotonylation and trimethylation of H3K27, may be involved in stress-induced depression-like behaviors, possibly by regulating VGF expression. In terms of biological role, not able to recognize and bind histone H3K9me3, histone H3K27me2 and histone H3K27me3, due to the presence of a N-terminal extension that inactivates the chromo domain. Its function is as follows. Not able to recognize and bind histone H3K9me3, histone H3K27me2 and histone H3K27me3, due to the absence of the chromo domain. Acts as a negative regulator of isoform 2 by displacing isoform 2 from chromatin. The sequence is that of Chromodomain Y-like protein from Homo sapiens (Human).